The primary structure comprises 634 residues: Ankyrin repeat and SOCS box protein 2 (634 aa).

The 20-residue stretch at 26 to 45 (SEEELLQMAIEQSLADKTRG) folds into the UIM domain. The segment at 36-82 (EQSLADKTRGPTPAEASASSQTNHQPGHFHPWTRSPSSPENPPARAP) is disordered. ANK repeat units follow at residues 104–133 (AAMDPVLKAIKEGDEEALKIMIQDGKNLAE), 137–167 (EGWLPLHEAAYYGQLGCLKVLQQAYPGTIDQ), 171–200 (QEETALYLATCREHLDCLLSLLQAGAEPDI), 204–233 (SRETPLYKACERKNAEAVRILVRYNADANH), 237–266 (RGWTALHESVSRNDLEVMEILVSGGAKVEA), 270–299 (YSITPLFVAAQSGQLEALRFLAKHGADINT), 303–332 (DSASALYEASKNEHEDVVEFLLSQGADANK), 336–365 (DGLLPLHVASKKGNYRIVQMLLPVTSRTRV), 368–397 (SGISPLHLAAERNHDAVLEALLAARFDVNA), 410–439 (RRSSALYFAVVNNNVYATELLLLAGADPNR), 440–469 (DVISPLLVAIRHGCLRTMQLLLDHGANIDA), and 476–504 (TAFPATIMFAMKCLSLLKFLMDLGCDGEP). Ser371 carries the post-translational modification Phosphoserine. The region spanning 580-634 (EDWAVIKEKAEPPRPLAHLCRLRVRKAIGKYRIKLLDTLPLPGRLIRYLKYENTQ) is the SOCS box domain.

This sequence belongs to the ankyrin SOCS box (ASB) family. Component of a probable ECS E3 ubiquitin-protein ligase complex which contains CUL5, either RBX1 or RNF7/RBX2, Elongin BC complex (ELOB and ELOC) and ASB2. Interacts with SKP2. Through its interaction with SKP2, likely to bridge the formation of dimeric E3-ubiquitin-protein ligase complexes composed of an ECS complex and an SCF(SKP2) complex. Interacts with JAK2; the interaction targets JAK2 for Notch-mediated proteasomal degradation. Interacts with TCF3/E2A; the interaction is mediated by SKP2 and targets TCF3 for Notch-mediated proteasomal degradation. As to quaternary structure, interacts with DES. Post-translationally, monoubiquitinated. In terms of processing, not monoubiquitinated. Phosphorylation at Ser-371 is required for association with FLNA and subsequent FLNA degradation. As to expression, highest expression in muscle, heart and spleen. Highly expressed in cells of the first and second heart fields in the developing embryonic heart. At 9.5 dpc, robust expression predominantly in the left and right ventricles (RV) and to a lower extent in inflow and outflow tracts. At 10.5 and 11.5 dpc, expression is restricted to the myocardium with no expression observed in the endocardium. Not expressed in immature dendritic cells. Highly expressed in adult skeletal muscle with very low levels in adult bone marrow. In terms of tissue distribution, expressed in immature dendritic cells and in primary dendritic cells derived from the spleen. Highly expressed in adult bone marrow with negligible levels in adult skeletal muscle. Expressed at higher levels in T helper type 2 (Th2) cells than in regulatory T (Treg) cells, type 1 helper T (Th1) cells and T helper 17 (Th17) cells.

The protein resides in the cytoplasm. It localises to the cytoskeleton. Its subcellular location is the stress fiber. It is found in the myofibril. The protein localises to the sarcomere. The protein resides in the z line. It participates in protein modification; protein ubiquitination. Its function is as follows. Substrate-recognition component of a SCF-like ECS (Elongin-Cullin-SOCS-box protein) E3 ubiquitin-protein ligase complex which mediates the ubiquitination and subsequent proteasomal degradation of target proteins. Mediates Notch-induced ubiquitination and degradation of substrates including TCF3/E2A and JAK2. Required during embryonic heart development for complete heart looping. Required for cardiomyocyte differentiation. Specifically promotes the ubiquitination of SMAD9 and targets it for proteasomal degradation, leading to avoid excessive accumulation of SMAD9. Plays a role in the regulation of NK-cell migration by modulating protein levels of filamin A/FLNA via regulation of its ubiquitination and proteasome degradation. Involved in myogenic differentiation and targets filamin FLNB for proteasomal degradation but not filamin FLNA. Also targets DES for proteasomal degradation. Acts as a negative regulator of skeletal muscle mass. In terms of biological role, targets filamins FLNA and FLNB for proteasomal degradation. This leads to enhanced adhesion of hematopoietic cells to fibronectin. Required for FLNA degradation in immature cardiomyocytes which is necessary for actin cytoskeleton remodeling, leading to proper organization of myofibrils and function of mature cardiomyocytes. Required for degradation of FLNA and FLNB in immature dendritic cells (DC) which enhances immature DC migration by promoting DC podosome formation and DC-mediated degradation of the extracellular matrix. Does not promote proteasomal degradation of tyrosine-protein kinases JAK1 or JAK2 in hematopoietic cells. This chain is Ankyrin repeat and SOCS box protein 2, found in Mus musculus (Mouse).